The primary structure comprises 116 residues: Large ribosomal subunit protein bL19 (116 aa).

The protein belongs to the bacterial ribosomal protein bL19 family.

Functionally, this protein is located at the 30S-50S ribosomal subunit interface and may play a role in the structure and function of the aminoacyl-tRNA binding site. The protein is Large ribosomal subunit protein bL19 of Pseudomonas entomophila (strain L48).